A 182-amino-acid polypeptide reads, in one-letter code: Large ribosomal subunit protein bL19m (182 aa).

A mitochondrion-targeting transit peptide spans 1–21 (MFNAKHFFNLGLGFQWLQKRG).

This sequence belongs to the bacterial ribosomal protein bL19 family. In terms of assembly, component of the mitochondrial large ribosomal subunit (mt-LSU). Mature yeast 74S mitochondrial ribosomes consist of a small (37S) and a large (54S) subunit. The 37S small subunit contains a 15S ribosomal RNA (15S mt-rRNA) and at least 32 different proteins. The 54S large subunit contains a 21S rRNA (21S mt-rRNA) and at least 45 different proteins.

It is found in the mitochondrion. In terms of biological role, component of the mitochondrial ribosome (mitoribosome), a dedicated translation machinery responsible for the synthesis of mitochondrial genome-encoded proteins, including at least some of the essential transmembrane subunits of the mitochondrial respiratory chain. The mitoribosomes are attached to the mitochondrial inner membrane and translation products are cotranslationally integrated into the membrane. bL19m is essential for respiration. The chain is Large ribosomal subunit protein bL19m (img1) from Schizosaccharomyces pombe (strain 972 / ATCC 24843) (Fission yeast).